The chain runs to 33 residues: Potassium channel toxin alpha-KTx 24.1 (33 aa).

Intrachain disulfides connect cysteine 4-cysteine 23, cysteine 9-cysteine 28, cysteine 13-cysteine 30, and cysteine 18-cysteine 33.

The protein belongs to the short scorpion toxin superfamily. Potassium channel inhibitor family. Alpha-KTx 24 subfamily. Contains 4 disulfide bonds. As to expression, expressed by the venom gland.

The protein localises to the secreted. Functionally, reversibly blocks voltage-gated potassium channels Kv1.2/KCNA2, Kv1.3/KCNA3 and, weakly, Shaker B. The polypeptide is Potassium channel toxin alpha-KTx 24.1 (Pandinus imperator (Emperor scorpion)).